The primary structure comprises 745 residues: Aminopeptidase NAALADL1 (745 aa).

Over 1–6 (MHWVKI) the chain is Cytoplasmic. Residues 7 to 28 (LGVALGAAALLGLGIILGHFAI) form a helical; Signal-anchor for type II membrane protein membrane-spanning segment. The Extracellular portion of the chain corresponds to 29–745 (PKATSPLTSS…AATLVPVADL (717 aa)). N-linked (GlcNAc...) asparagine glycans are attached at residues Asn-128, Asn-141, and Asn-235. Ca(2+)-binding residues include Thr-263 and Leu-266. N-linked (GlcNAc...) asparagine glycosylation is found at Asn-279, Asn-302, and Asn-329. Cys-301 and Cys-318 are joined by a disulfide. 2 residues coordinate Zn(2+): His-373 and Asp-383. The active-site Proton donor/acceptor is the Glu-421. Glu-422 lines the Zn(2+) pocket. Glu-430 and Glu-433 together coordinate Ca(2+). Asp-450 lines the Zn(2+) pocket. N-linked (GlcNAc...) asparagine glycans are attached at residues Asn-456 and Asn-497. His-550 contacts Zn(2+). N-linked (GlcNAc...) asparagine glycans are attached at residues Asn-593 and Asn-620.

The protein belongs to the peptidase M28 family. M28B subfamily. In terms of assembly, homodimer. The cofactor is Zn(2+). In terms of processing, N-glycosylated.

Its subcellular location is the apical cell membrane. Aminopeptidase with broad substrate specificity. Has lower activity with substrates that have Asp or Glu in the P2' position, or Pro in the P3' position. Lacks activity with substrates that have both Pro in the P3' position and Asp or Glu in the P2' position. Lacks carboxypeptidase activity. Lacks dipeptidyl-peptidase IV type activity. This is Aminopeptidase NAALADL1 (Naaladl1) from Mus musculus (Mouse).